The primary structure comprises 59 residues: Large ribosomal subunit protein bL32 (59 aa).

Basic residues predominate over residues 1–20 (MAVPKKKTSKGKRNQRHATW). The disordered stretch occupies residues 1–22 (MAVPKKKTSKGKRNQRHATWKG).

The protein belongs to the bacterial ribosomal protein bL32 family.

The sequence is that of Large ribosomal subunit protein bL32 from Prochlorococcus marinus (strain NATL1A).